Here is a 361-residue protein sequence, read N- to C-terminus: Putative F-box protein At3g18340 (361 aa).

One can recognise an F-box domain in the interval 1–46 (MASGKLPWELEEEILCRLPPGSLVRLRSVCKHWNDLYNDKWFIKKS).

This Arabidopsis thaliana (Mouse-ear cress) protein is Putative F-box protein At3g18340.